We begin with the raw amino-acid sequence, 378 residues long: MSKRDYYEVLSVGRDASEREIKKAYKRLAMKFHPDRNPGDKAAETSFKEVKEAYEILTDSDKKAAYDQFGHAGVDPNRGGGGFGGNADFGDVFGDVFGDIFGGGRRGGGQRQAARGSDLRYNLELSLEEAVKGLTKELRIPTLAHCDTCDGSGAKKGTSPTTCGTCHGQGQVQMRQGFFAVQQACPTCHGRGKIIKDPCNSCHGEGRVEKSKTLSVKIPAGVDNGDRIRLSGEGEAGEFGAPPGDLYVQVSVREHAIFVRDGNNLYCEVPISFGKAALGGEIEVPTLDGKVNLKIPAETQTGRMFRMRGKGVKSVRSHAVGDLLCKVVMETPVKLNERQKELLREFDETLAGSSSKKHSPKAEGFFDGVKKFFQDLNS.

The region spanning 5–70 is the J domain; sequence DYYEVLSVGR…DKKAAYDQFG (66 aa). The CR-type zinc-finger motif lies at 133 to 211; that stretch reads GLTKELRIPT…CHGEGRVEKS (79 aa). Zn(2+) contacts are provided by Cys146, Cys149, Cys163, Cys166, Cys185, Cys188, Cys199, and Cys202. 4 CXXCXGXG motif repeats span residues 146–153, 163–170, 185–192, and 199–206; these read CDTCDGSG, CGTCHGQG, CPTCHGRG, and CNSCHGEG.

This sequence belongs to the DnaJ family. In terms of assembly, homodimer. Zn(2+) is required as a cofactor.

Its subcellular location is the cytoplasm. Its function is as follows. Participates actively in the response to hyperosmotic and heat shock by preventing the aggregation of stress-denatured proteins and by disaggregating proteins, also in an autonomous, DnaK-independent fashion. Unfolded proteins bind initially to DnaJ; upon interaction with the DnaJ-bound protein, DnaK hydrolyzes its bound ATP, resulting in the formation of a stable complex. GrpE releases ADP from DnaK; ATP binding to DnaK triggers the release of the substrate protein, thus completing the reaction cycle. Several rounds of ATP-dependent interactions between DnaJ, DnaK and GrpE are required for fully efficient folding. Also involved, together with DnaK and GrpE, in the DNA replication of plasmids through activation of initiation proteins. The sequence is that of Chaperone protein DnaJ from Shewanella woodyi (strain ATCC 51908 / MS32).